We begin with the raw amino-acid sequence, 258 residues long: NAD(P)H-hydrate epimerase (258 aa).

Residues 15–244 (AFQLDQELMS…RIAKEYGIED (230 aa)) enclose the YjeF N-terminal domain. 75–79 (NNGGD) lines the (6S)-NADPHX pocket. K(+) contacts are provided by asparagine 76 and aspartate 145. (6S)-NADPHX contacts are provided by residues 149–155 (GFSFKPP) and aspartate 181. K(+) is bound at residue serine 184.

This sequence belongs to the NnrE/AIBP family. K(+) serves as cofactor.

The protein resides in the cytoplasm. It localises to the mitochondrion. It carries out the reaction (6R)-NADHX = (6S)-NADHX. The catalysed reaction is (6R)-NADPHX = (6S)-NADPHX. Functionally, catalyzes the epimerization of the S- and R-forms of NAD(P)HX, a damaged form of NAD(P)H that is a result of enzymatic or heat-dependent hydration. This is a prerequisite for the S-specific NAD(P)H-hydrate dehydratase to allow the repair of both epimers of NAD(P)HX. The sequence is that of NAD(P)H-hydrate epimerase from Candida albicans (strain SC5314 / ATCC MYA-2876) (Yeast).